A 261-amino-acid chain; its full sequence is Glucose 1-dehydrogenase 1 (261 aa).

Residue 11 to 35 (VITGSSTGLGKAMAIRFATEKAKVV) coordinates NADP(+). Ser-145 is a substrate binding site. Tyr-158 (proton acceptor) is an active-site residue.

The protein belongs to the short-chain dehydrogenases/reductases (SDR) family. Homotetramer.

It carries out the reaction D-glucose + NAD(+) = D-glucono-1,5-lactone + NADH + H(+). It catalyses the reaction D-glucose + NADP(+) = D-glucono-1,5-lactone + NADPH + H(+). Its function is as follows. May play some role in spore germination. The sequence is that of Glucose 1-dehydrogenase 1 (gdhI) from Priestia megaterium (Bacillus megaterium).